The sequence spans 509 residues: Cobyric acid synthase (509 aa).

A GATase cobBQ-type domain is found at 262–459 (EIKVGIIKLP…IHGIFENDIW (198 aa)). Catalysis depends on Cys343, which acts as the Nucleophile. His451 is a catalytic residue.

It belongs to the CobB/CobQ family. CobQ subfamily.

Its pathway is cofactor biosynthesis; adenosylcobalamin biosynthesis. Functionally, catalyzes amidations at positions B, D, E, and G on adenosylcobyrinic A,C-diamide. NH(2) groups are provided by glutamine, and one molecule of ATP is hydrogenolyzed for each amidation. This Prochlorococcus marinus (strain MIT 9312) protein is Cobyric acid synthase.